The chain runs to 378 residues: C-X-C chemokine receptor type 3-2 (378 aa).

The Extracellular segment spans residues 1–47 (MDNSTTAAEVSAPTDYDYNSTSYDDDNPYAAPCSLTETWNFLGRFAP). Residues Asn3 and Asn19 are each glycosylated (N-linked (GlcNAc...) asparagine). A helical membrane pass occupies residues 48 to 68 (VAYILVFILALVGNILVLCVI). The Cytoplasmic segment spans residues 69 to 86 (RRYRQSRHSPCSFSLTDT). A helical transmembrane segment spans residues 87-107 (FLLHLAVSDLLLAATLPFFAV). Residues 108 to 121 (EWISEWVFGKVMCK) lie on the Extracellular side of the membrane. Cys120 and Cys199 are oxidised to a cystine. The helical transmembrane segment at 122-142 (ITGALFSLNVYCGVLFLACIS) threads the bilayer. Residues 143–164 (FDRYLAIVHAINISWRRKTCHA) are Cytoplasmic-facing. A helical membrane pass occupies residues 165-185 (QLACAFIWVICLGLSMVDMHF). At 186–212 (RDLVEIPGMNRMVCQIVYSEQYSKQWQ) the chain is on the extracellular side. A helical membrane pass occupies residues 213–233 (IGMQLVSMVLGFILPLLVMLY). The Cytoplasmic segment spans residues 234-253 (CYLHIFKALCHATRRQKRRS). Residues 254–274 (LRLIISLVIVFVISWAPYNAL) traverse the membrane as a helical segment. Over 275–304 (RMTDSLQMLGVIVKSCALNNVLDVGILVTE) the chain is Extracellular. A helical membrane pass occupies residues 305–325 (SLGLAHCALNPLLYGLVGVKF). Topologically, residues 326 to 378 (RRELAQMCKAALGPQGCLGLVGWANGRGSSTRRPTGSFSSVETENTSYFSVMA) are cytoplasmic.

Belongs to the G-protein coupled receptor 1 family.

It is found in the cell membrane. Functionally, receptor for the C-X-C chemokines cxcl11.1 and cxcl11.6. Promotes macrophage chemotaxis to sites of bacterial infection. This chain is C-X-C chemokine receptor type 3-2, found in Danio rerio (Zebrafish).